The chain runs to 254 residues: Homeobox protein BarH-like 1 (254 aa).

A disordered region spans residues 1 to 20 (MQRPGEPGAARFGPPEGCAD). A DNA-binding region (homeobox) is located at residues 142-201 (GRRSRTVFTELQLMGLEKRFEKQKYLSTPDRIDLAESLGLSQLQVKTWYQNRRMKWKKIV). Residues 204–254 (GGGLESPTKPKGRPKKNSIPTSEQLTEQERAKDAEKPAEVPGEPSDRSRED) form a disordered region. Residues 230–254 (EQERAKDAEKPAEVPGEPSDRSRED) show a composition bias toward basic and acidic residues.

It belongs to the BAR homeobox family. Widely expressed. Expressed at higher levels in testis and heart. Detected in craniofacial tissue and adult iris, but not in lymphocytes, fibroblasts, choroid retina, retinal pigment epithelium, kidney, or fetal liver.

It is found in the nucleus. In terms of biological role, transcription factor, which is involved in craniofacial development, in odontogenesis and in stomach organogenesis. May have a role in the differentiation of molars from incisors. Plays a role in suppressing endodermal Wnt activity. Binds to a regulatory module of the NCAM promoter. In Homo sapiens (Human), this protein is Homeobox protein BarH-like 1 (BARX1).